We begin with the raw amino-acid sequence, 398 residues long: Phosphoglycerate kinase (398 aa).

Substrate-binding positions include 23–25 (DFN), arginine 38, 61–64 (HMGK), arginine 122, and arginine 155. ATP is bound by residues lysine 206, glycine 297, glutamate 328, and 354–357 (GGDS).

The protein belongs to the phosphoglycerate kinase family. As to quaternary structure, monomer.

The protein resides in the cytoplasm. It carries out the reaction (2R)-3-phosphoglycerate + ATP = (2R)-3-phospho-glyceroyl phosphate + ADP. The protein operates within carbohydrate degradation; glycolysis; pyruvate from D-glyceraldehyde 3-phosphate: step 2/5. The chain is Phosphoglycerate kinase from Clostridium botulinum (strain Kyoto / Type A2).